Reading from the N-terminus, the 389-residue chain is Chalcone synthase 1 (389 aa).

Cys164 is an active-site residue.

Belongs to the thiolase-like superfamily. Chalcone/stilbene synthases family.

The enzyme catalyses (E)-4-coumaroyl-CoA + 3 malonyl-CoA + 3 H(+) = 2',4,4',6'-tetrahydroxychalcone + 3 CO2 + 4 CoA. The protein operates within secondary metabolite biosynthesis; flavonoid biosynthesis. The primary product of this enzyme is 4,2',4',6'-tetrahydroxychalcone (also termed naringenin-chalcone or chalcone) which can under specific conditions spontaneously isomerize into naringenin. In Solanum lycopersicum (Tomato), this protein is Chalcone synthase 1 (CHS1).